The chain runs to 63 residues: Large ribosomal subunit protein uL29 (63 aa).

It belongs to the universal ribosomal protein uL29 family.

This is Large ribosomal subunit protein uL29 from Mannheimia succiniciproducens (strain KCTC 0769BP / MBEL55E).